Reading from the N-terminus, the 270-residue chain is Glucan endo-1,3-beta-glucosidase (270 aa).

A signal peptide spans 1-18 (MNAFTFPLLLAFCAFAHG). Residues 22–270 (LDWEDEFNGG…VEYVKKWTWN (249 aa)) enclose the GH16 domain. Glutamate 137 functions as the Nucleophile in the catalytic mechanism. Glutamate 142 serves as the catalytic Proton donor.

Belongs to the glycosyl hydrolase 16 family.

The protein resides in the secreted. It carries out the reaction Hydrolysis of (1-&gt;3)-beta-D-glucosidic linkages in (1-&gt;3)-beta-D-glucans.. With respect to regulation, ca(2+) does not affect the enzyme activity nor the thermostability. Other cations, such as Mg(2+), Mn(2+), Cu(2+), Zn(2+), Ag(+) or Hg(2+) do not cause any serious adverse effect on the activity. Also no significant change in the activity in response to the addition of 1 mM EDTA. Its function is as follows. Hydrolyzes laminarin majorily to glucose (G1), laminaribiose (L2), laminaritriose (L3), laminaritetraose (L4) and laminaripentaose (L5). Hydrolyzes laminarioligosaccharides L3, L4, L5 and laminarihexaose (L6) to G1, L2 and L3. Hardly hydrolyzes L2. Does not hydrolyze lichenan, pustulan, carboxymethyl cellulose, locust bean gum or soluble starch. The polypeptide is Glucan endo-1,3-beta-glucosidase (Cryptopygus antarcticus (Antarctic springtail)).